The following is a 104-amino-acid chain: L-rhamnose mutarotase (104 aa).

Y18 provides a ligand contact to substrate. Catalysis depends on H22, which acts as the Proton donor. Substrate is bound by residues Y41 and 76–77; that span reads WW.

Belongs to the rhamnose mutarotase family. As to quaternary structure, homodimer.

It is found in the cytoplasm. It carries out the reaction alpha-L-rhamnose = beta-L-rhamnose. It participates in carbohydrate metabolism; L-rhamnose metabolism. Involved in the anomeric conversion of L-rhamnose. In Phocaeicola vulgatus (strain ATCC 8482 / DSM 1447 / JCM 5826 / CCUG 4940 / NBRC 14291 / NCTC 11154) (Bacteroides vulgatus), this protein is L-rhamnose mutarotase.